The sequence spans 401 residues: F-box protein At1g69090 (401 aa).

A disordered region spans residues 1 to 23 (MASPTLALAQSPPPKSPAVSVSQ). An F-box domain is found at 27 to 74 (HCWSKLPLDLMQLVFERLAFLDFERAKSVCSSWQFGSKQSKPNNQIPW).

This is F-box protein At1g69090 from Arabidopsis thaliana (Mouse-ear cress).